The following is a 261-amino-acid chain: Succinate dehydrogenase [ubiquinone] iron-sulfur subunit, mitochondrial (261 aa).

The 2Fe-2S ferredoxin-type domain maps to 31 to 122 (FKIYRWNPDT…DVKIYPLPHM (92 aa)). 4 residues coordinate [2Fe-2S] cluster: Cys-82, Cys-87, Cys-90, and Cys-102. Residues 164-194 (DRKKLDGLYECILCACCSTACPSYWWNNEQY) form the 4Fe-4S ferredoxin-type domain. Residues Cys-174, Cys-177, and Cys-180 each contribute to the [4Fe-4S] cluster site. Cys-184 contributes to the [3Fe-4S] cluster binding site. Trp-189 contributes to the a ubiquinone binding site. [3Fe-4S] cluster-binding residues include Cys-231 and Cys-237. Cys-241 is a [4Fe-4S] cluster binding site.

The protein belongs to the succinate dehydrogenase/fumarate reductase iron-sulfur protein family. In terms of assembly, component of complex II composed of four subunits: a flavoprotein (FP), an iron-sulfur protein (IP), and a cytochrome b composed of a large and a small subunit. [2Fe-2S] cluster serves as cofactor. The cofactor is [3Fe-4S] cluster. [4Fe-4S] cluster is required as a cofactor.

It localises to the mitochondrion inner membrane. The catalysed reaction is a quinone + succinate = fumarate + a quinol. It functions in the pathway carbohydrate metabolism; tricarboxylic acid cycle; fumarate from succinate (eukaryal route): step 1/1. Iron-sulfur protein (IP) subunit of succinate dehydrogenase (SDH) that is involved in complex II of the mitochondrial electron transport chain and is responsible for transferring electrons from succinate to ubiquinone (coenzyme Q). In Eremothecium gossypii (strain ATCC 10895 / CBS 109.51 / FGSC 9923 / NRRL Y-1056) (Yeast), this protein is Succinate dehydrogenase [ubiquinone] iron-sulfur subunit, mitochondrial (SDH2).